A 552-amino-acid chain; its full sequence is Polypeptide N-acetylgalactosaminyltransferase 14 (552 aa).

The Cytoplasmic portion of the chain corresponds to 1–6 (MRRLTR). Residues 7–26 (RLVLPVFGVLWITVLLFFWV) form a helical; Signal-anchor for type II membrane protein membrane-spanning segment. Over 27-552 (TKRKLEVPTG…MSQHWDMVSS (526 aa)) the chain is Lumenal. 5 disulfides stabilise this stretch: Cys101/Cys328, Cys319/Cys397, Cys430/Cys449, Cys476/Cys493, and Cys517/Cys538. A catalytic subdomain A region spans residues 110–215 (LPPTSIIITF…RDWLQPLLHR (106 aa)). Substrate-binding residues include Asp151 and Arg176. Mn(2+) is bound at residue Asp199. Ser200 contributes to the substrate binding site. Mn(2+) is bound at residue His201. Residues 274–336 (PIRTPIIAGG…PCSRVGHVFR (63 aa)) form a catalytic subdomain B region. Trp305 is a binding site for substrate. A Mn(2+)-binding site is contributed by His333. Residues Arg336, His339, and Tyr341 each contribute to the substrate site. Residues 415-550 (KESSIQKGNI…SLMSQHWDMV (136 aa)) enclose the Ricin B-type lectin domain.

This sequence belongs to the glycosyltransferase 2 family. GalNAc-T subfamily. It depends on Mn(2+) as a cofactor. Detected in renal tubules (at protein level). Highly expressed in fetal and adult kidney. Widely expressed at low level. Weakly expressed in whole brain, cerebellum, thymus, lung, mammary gland, liver, stomach, small intestine, colon, pancreas, spleen, bladder, uterus, placenta, testis, ovary, skeletal muscle, leukocyte, B-cell, bone marrow, fetal brain, fetal thymus, fetal lung, fetal liver, fetal small intestine, fetal spleen, fetal skeletal and fetus. Detected in renal tubules (at protein level).

The protein localises to the golgi apparatus membrane. The catalysed reaction is L-seryl-[protein] + UDP-N-acetyl-alpha-D-galactosamine = a 3-O-[N-acetyl-alpha-D-galactosaminyl]-L-seryl-[protein] + UDP + H(+). It catalyses the reaction L-threonyl-[protein] + UDP-N-acetyl-alpha-D-galactosamine = a 3-O-[N-acetyl-alpha-D-galactosaminyl]-L-threonyl-[protein] + UDP + H(+). It functions in the pathway protein modification; protein glycosylation. Catalyzes the initial reaction in O-linked oligosaccharide biosynthesis, the transfer of an N-acetyl-D-galactosamine residue to a serine or threonine residue on the protein receptor. Displays activity toward mucin-derived peptide substrates such as Muc2, Muc5AC, Muc7, and Muc13 (-58). May be involved in O-glycosylation in kidney. This is Polypeptide N-acetylgalactosaminyltransferase 14 (GALNT14) from Homo sapiens (Human).